We begin with the raw amino-acid sequence, 372 residues long: Peroxisomal biogenesis factor 3 (372 aa).

The Cytoplasmic portion of the chain corresponds to 1 to 15; it reads MLRSMWNFLKRHKKK. A targeting to peroxisomes region spans residues 1–45; that stretch reads MLRSMWNFLKRHKKKCIFLGTVLGGVYILGKYGQKKLREIQEREA. Residues 16–36 traverse the membrane as a helical segment; it reads CIFLGTVLGGVYILGKYGQKK. Residues 37–116 lie on the Peroxisomal side of the membrane; sequence LREIQEREAA…LKIISFTRSI (80 aa). A helical transmembrane segment spans residues 117–140; that stretch reads VAVYSTCMLVVLLRVQLNIIGGYI. The tract at residues 120–136 is interaction with PEX19; it reads YSTCMLVVLLRVQLNII. Over 141 to 372 the chain is Cytoplasmic; that stretch reads YLDNATVGKN…AFSTPQQLEK (232 aa).

Belongs to the peroxin-3 family. Interacts with PEX19.

Its subcellular location is the peroxisome membrane. Functionally, involved in peroxisome biosynthesis and integrity. Assembles membrane vesicles before the matrix proteins are translocated. As a docking factor for PEX19, is necessary for the import of peroxisomal membrane proteins in the peroxisomes. The polypeptide is Peroxisomal biogenesis factor 3 (Pex3) (Rattus norvegicus (Rat)).